An 823-amino-acid chain; its full sequence is ATP-dependent RNA helicase HrpA (823 aa).

The Helicase ATP-binding domain maps to 16–179 (IKVLKNHNVL…FNNAPVVSIE (164 aa)). 29–36 (SPTGSGKT) is a binding site for ATP. Residues 126–129 (DEAH) carry the DEAH box motif. Residues 203–374 (KIKEIVLNVI…EVVLRMADIG (172 aa)) form the Helicase C-terminal domain.

The protein belongs to the DEAD box helicase family. DEAH subfamily.

It carries out the reaction ATP + H2O = ADP + phosphate + H(+). In terms of biological role, has RNA-stimulated ATPase activity and RNA helicase activity. Involved in global regulation of gene expression. Could be involved in RNA processing and post-transcriptional gene regulation. Essential for both tick transmission and mouse infection. This Borreliella burgdorferi (strain ATCC 35210 / DSM 4680 / CIP 102532 / B31) (Borrelia burgdorferi) protein is ATP-dependent RNA helicase HrpA.